The primary structure comprises 322 residues: uncharacterized protein (322 aa).

Basic residues-rich tracts occupy residues M1–T16 and L43–V61. Positions M1–T69 are disordered. Residues G261, I281, and L290 each coordinate S-adenosyl-L-methionine.

Belongs to the class IV-like SAM-binding methyltransferase superfamily. RNA methyltransferase TrmH family.

This is an uncharacterized protein from Mycobacterium tuberculosis (strain CDC 1551 / Oshkosh).